We begin with the raw amino-acid sequence, 76 residues long: uncharacterized protein (76 aa).

The chain crosses the membrane as a helical span at residues 53 to 70 (STKLHIIWFCIFAIFIAV).

The protein localises to the membrane. This is an uncharacterized protein from Haemophilus influenzae (strain ATCC 51907 / DSM 11121 / KW20 / Rd).